The chain runs to 75 residues: Small ribosomal subunit protein bS18 (75 aa).

The protein belongs to the bacterial ribosomal protein bS18 family. Part of the 30S ribosomal subunit. Forms a tight heterodimer with protein bS6.

Functionally, binds as a heterodimer with protein bS6 to the central domain of the 16S rRNA, where it helps stabilize the platform of the 30S subunit. The chain is Small ribosomal subunit protein bS18 from Buchnera aphidicola subsp. Acyrthosiphon pisum (strain 5A).